A 545-amino-acid polypeptide reads, in one-letter code: Serine/threonine-protein kinase PAK 1 (545 aa).

The tract at residues 1 to 77 is disordered; sequence MSNNGLDIQD…KEKERPEISL (77 aa). Ser2 is subject to N-acetylserine. The residue at position 21 (Ser21) is a Phosphoserine; by PKB and autocatalysis. The residue at position 57 (Ser57) is a Phosphoserine; by autocatalysis. The segment covering 68 to 77 has biased composition (basic and acidic residues); the sequence is KEKERPEISL. Residues 70–140 form an autoregulatory region region; that stretch reads KERPEISLPS…YNSKKTSNSQ (71 aa). The CRIB domain maps to 75–88; sequence ISLPSDFEHTIHVG. The GTPase-binding stretch occupies residues 75–105; the sequence is ISLPSDFEHTIHVGFDAVTGEFTGMPEQWAR. Thr84 carries the phosphothreonine; by OXSR1 modification. A Phosphoserine modification is found at Ser115. Residues Tyr131 and Tyr142 each carry the phosphotyrosine modification. Ser144 is modified (phosphoserine; by autocatalysis). Ser149 carries the post-translational modification Phosphoserine. Tyr153 is subject to Phosphotyrosine; by JAK2. A disordered region spans residues 159 to 198; that stretch reads LNVKAVSETPAVPPVSEDEDDDDDDATPPPVIAPRPEHTK. Phosphoserine is present on Ser174. A compositionally biased stretch (acidic residues) spans 174-184; the sequence is SEDEDDDDDDA. Thr185 is modified (phosphothreonine). A Phosphoserine; by autocatalysis modification is found at Ser199. Tyr201 carries the phosphotyrosine; by JAK2 modification. Phosphoserine is present on Ser204. The tract at residues 211-251 is disordered; that stretch reads VTPTRDVATSPISPTENNTTPPDALTRNTEKQKKKPKMSDE. Thr212 and Thr219 each carry phosphothreonine. Phosphoserine is present on residues Ser220 and Ser223. Polar residues predominate over residues 220–231; that stretch reads SPISPTENNTTP. Phosphothreonine occurs at positions 225, 229, and 230. The 252-residue stretch at 270–521 folds into the Protein kinase domain; the sequence is YTRFEKIGQG…AKELLQHQFL (252 aa). 276-284 is a binding site for ATP; it reads IGQGASGTV. Position 285 is a phosphotyrosine; by JAK2 (Tyr285). Residues Lys299 and 345 to 347 each bind ATP; that span reads EYL. The active-site Proton acceptor is Asp389. The residue at position 423 (Thr423) is a Phosphothreonine; by autocatalysis, BRSK2 and PDPK1.

The protein belongs to the protein kinase superfamily. STE Ser/Thr protein kinase family. STE20 subfamily. As to quaternary structure, homodimer; homodimerization results in autoinhibition. Active as monomer. Interacts with GIT1. Component of cytoplasmic complexes, which also contains PXN, ARHGEF7 and GIT1. Interacts with NISCH. Interacts with DVL1; mediates the formation of a DVL1, MUSK and PAK1 ternary complex involved in AChR clustering. Binds to the caspase-cleaved p110 isoform of CDC2L1 and CDC2L2, p110C, but not the full-length proteins. Interacts with ARHGEF7. Interacts tightly with GTP-bound but not GDP-bound CDC42/P21 and RAC1. Interacts with SCRIB. Interacts with PDPK1. Interacts (via kinase domain) with RAF1. Interacts with NCK1 and NCK2. Interacts with TBCB. Interacts with BRSK2. Interacts with SNAI1. Interacts with CIB1 isoform 2. Interacts with CIB1 (via N-terminal region); the interaction is direct, promotes PAK1 activity and occurs in a calcium-dependent manner. Interacts with INPP5K. Interacts with gamma-tubulin. Interacts with RHOU; the interaction promotes PAK1 activation. Requires Mg(2+) as cofactor. Post-translationally, autophosphorylated in trans, meaning that in a dimer, one kinase molecule phosphorylates the other one. Activated by autophosphorylation at Thr-423 in response to a conformation change, triggered by interaction with GTP-bound CDC42 or RAC1. Activated by phosphorylation at Thr-423 by BRSK2 and by PDPK1. Phosphorylated by JAK2 in response to PRL; this increases PAK1 kinase activity. Phosphorylated at Ser-21 by PKB/AKT; this reduces interaction with NCK1 and association with focal adhesion sites. Upon DNA damage, phosphorylated at Thr-212 and translocates to the nucleoplasm. Phosphorylated at tyrosine residues, which can be enhanced by NTN1. Overexpressed in gastric cancer cells and tissues (at protein level).

It localises to the cytoplasm. The protein localises to the cell junction. The protein resides in the focal adhesion. It is found in the cell projection. Its subcellular location is the lamellipodium. It localises to the cell membrane. The protein localises to the ruffle membrane. The protein resides in the invadopodium. It is found in the nucleus. Its subcellular location is the nucleoplasm. It localises to the chromosome. The protein localises to the cytoskeleton. The protein resides in the microtubule organizing center. It is found in the centrosome. It carries out the reaction L-seryl-[protein] + ATP = O-phospho-L-seryl-[protein] + ADP + H(+). It catalyses the reaction L-threonyl-[protein] + ATP = O-phospho-L-threonyl-[protein] + ADP + H(+). With respect to regulation, activated by binding small G proteins. Binding of GTP-bound CDC42 or RAC1 to the autoregulatory region releases monomers from the autoinhibited dimer, and enables activation by phosphorylation of Thr-423. Phosphorylation of Thr-84 by OXSR1 inhibits activation. Its function is as follows. Protein kinase involved in intracellular signaling pathways downstream of integrins and receptor-type kinases that plays an important role in cytoskeleton dynamics, in cell adhesion, migration, proliferation, apoptosis, mitosis, and in vesicle-mediated transport processes. Can directly phosphorylate BAD and protects cells against apoptosis. Activated by interaction with CDC42 and RAC1. Functions as a GTPase effector that links the Rho-related GTPases CDC42 and RAC1 to the JNK MAP kinase pathway. Phosphorylates and activates MAP2K1, and thereby mediates activation of downstream MAP kinases. Involved in the reorganization of the actin cytoskeleton, actin stress fibers and of focal adhesion complexes. Phosphorylates the tubulin chaperone TBCB and thereby plays a role in the regulation of microtubule biogenesis and organization of the tubulin cytoskeleton. Plays a role in the regulation of insulin secretion in response to elevated glucose levels. Part of a ternary complex that contains PAK1, DVL1 and MUSK that is important for MUSK-dependent regulation of AChR clustering during the formation of the neuromuscular junction (NMJ). Activity is inhibited in cells undergoing apoptosis, potentially due to binding of CDC2L1 and CDC2L2. Phosphorylates MYL9/MLC2. Phosphorylates RAF1 at 'Ser-338' and 'Ser-339' resulting in: activation of RAF1, stimulation of RAF1 translocation to mitochondria, phosphorylation of BAD by RAF1, and RAF1 binding to BCL2. Phosphorylates SNAI1 at 'Ser-246' promoting its transcriptional repressor activity by increasing its accumulation in the nucleus. In podocytes, promotes NR3C2 nuclear localization. Required for atypical chemokine receptor ACKR2-induced phosphorylation of LIMK1 and cofilin (CFL1) and for the up-regulation of ACKR2 from endosomal compartment to cell membrane, increasing its efficiency in chemokine uptake and degradation. In synapses, seems to mediate the regulation of F-actin cluster formation performed by SHANK3, maybe through CFL1 phosphorylation and inactivation. Plays a role in RUFY3-mediated facilitating gastric cancer cells migration and invasion. In response to DNA damage, phosphorylates MORC2 which activates its ATPase activity and facilitates chromatin remodeling. In neurons, plays a crucial role in regulating GABA(A) receptor synaptic stability and hence GABAergic inhibitory synaptic transmission through its role in F-actin stabilization. In hippocampal neurons, necessary for the formation of dendritic spines and excitatory synapses; this function is dependent on kinase activity and may be exerted by the regulation of actomyosin contractility through the phosphorylation of myosin II regulatory light chain (MLC). Along with GIT1, positively regulates microtubule nucleation during interphase. Phosphorylates FXR1, promoting its localization to stress granules and activity. Phosphorylates ILK on 'Thr-173' and 'Ser-246', promoting nuclear export of ILK. This chain is Serine/threonine-protein kinase PAK 1, found in Homo sapiens (Human).